The chain runs to 251 residues: Phosphate import ATP-binding protein PstB (251 aa).

One can recognise an ABC transporter domain in the interval 5–246; it reads MNSKDVNFWY…PENKKTEDYI (242 aa). 37–44 is a binding site for ATP; it reads GPSGCGKS.

It belongs to the ABC transporter superfamily. Phosphate importer (TC 3.A.1.7) family. In terms of assembly, the complex is composed of two ATP-binding proteins (PstB), two transmembrane proteins (PstC and PstA) and a solute-binding protein (PstS).

Its subcellular location is the cell membrane. It catalyses the reaction phosphate(out) + ATP + H2O = ADP + 2 phosphate(in) + H(+). In terms of biological role, part of the ABC transporter complex PstSACB involved in phosphate import. Responsible for energy coupling to the transport system. This is Phosphate import ATP-binding protein PstB from Methanococcus maripaludis (strain DSM 14266 / JCM 13030 / NBRC 101832 / S2 / LL).